Consider the following 318-residue polypeptide: Transcription factor MYBS3 (318 aa).

Disordered stretches follow at residues 1 to 20 (MTRR…TCPN) and 50 to 98 (AAGS…PWTE). Residues 3 to 20 (RRCSHCSHNGHNSRTCPN) form a CCHC-type zinc finger. Residues 8-18 (CSHNGHNSRTC) are compositionally biased toward polar residues. Positions 50 to 77 (AAGSTSGGASPADGPDAAPTAADGYASD) are enriched in low complexity. In terms of domain architecture, HTH myb-type spans 88–144 (RDRKKGVPWTEEEHRRFLLGLQKLGKGDWRGISRNFVVSRTPTQVASHAQKYFIRQS). The segment at residues 116–140 (WRGISRNFVVSRTPTQVASHAQKYF) is a DNA-binding region (H-T-H motif). Residues 159–200 (VPDESMDLPPLPGGQEPETQVLNQPALPPPREEEEVDSMESD) form a disordered region.

In terms of tissue distribution, expressed in all tissues, with the highest level in senescent leaves.

The protein localises to the nucleus. Its function is as follows. Transcription repressor that binds to 5'-TATCCA-3' elements in gene promoters. Contributes to the sugar-repressed transcription of promoters containing SRS or 5'-TATCCA-3' elements. Transcription repressor involved in a cold stress response pathway that confers cold tolerance. Suppresses the DREB1-dependent signaling pathway under prolonged cold stress. DREB1 responds quickly and transiently while MYBS3 responds slowly to cold stress. They may act sequentially and complementarily for adaptation to short- and long-term cold stress. The sequence is that of Transcription factor MYBS3 from Oryza sativa subsp. japonica (Rice).